The primary structure comprises 219 residues: C-8 sterol isomerase erg2 (219 aa).

Residues 1–21 (MKLTKFLTVFIPFIAGLIYYI) traverse the membrane as a helical segment.

It belongs to the ERG2 family.

The protein resides in the endoplasmic reticulum membrane. The catalysed reaction is fecosterol = episterol. Its pathway is steroid metabolism; ergosterol biosynthesis. Functionally, C-8 sterol isomerase; part of the third module of ergosterol biosynthesis pathway that includes by the late steps of the pathway. Erg2 catalyzes the reaction which results in unsaturation at C-7 in the B ring of sterols and thus converts fecosterol to episterol. The third module or late pathway involves the ergosterol synthesis itself through consecutive reactions that mainly occur in the endoplasmic reticulum (ER) membrane. Firstly, the squalene synthase erg9 catalyzes the condensation of 2 farnesyl pyrophosphate moieties to form squalene, which is the precursor of all steroids. Secondly, squalene is converted into lanosterol by the consecutive action of the squalene epoxidase erg1 and the lanosterol synthase erg7. The lanosterol 14-alpha-demethylase erg11/cyp1 catalyzes C14-demethylation of lanosterol to produce 4,4'-dimethyl cholesta-8,14,24-triene-3-beta-ol. In the next steps, a complex process involving various demethylation, reduction and desaturation reactions catalyzed by the C-14 reductase erg24 and the C-4 demethylation complex erg25-erg26-erg27 leads to the production of zymosterol. Erg28 likely functions in the C-4 demethylation complex reaction by tethering erg26 and Erg27 to the endoplasmic reticulum or to facilitate interaction between these proteins. Then, the sterol 24-C-methyltransferase erg6 catalyzes the methyl transfer from S-adenosyl-methionine to the C-24 of zymosterol to form fecosterol. The C-8 sterol isomerase erg2 catalyzes the reaction which results in unsaturation at C-7 in the B ring of sterols and thus converts fecosterol to episterol. The sterol-C5-desaturases erg31 and erg32 then catalyze the introduction of a C-5 double bond in the B ring to produce 5-dehydroepisterol. The C-22 sterol desaturase erg5 further converts 5-dehydroepisterol into ergosta-5,7,22,24(28)-tetraen-3beta-ol by forming the C-22(23) double bond in the sterol side chain. Finally, ergosta-5,7,22,24(28)-tetraen-3beta-ol is substrate of the C-24(28) sterol reductase erg4 to produce ergosterol. In the genus Schizosaccharomyces, a second route exists between lanosterol and fecosterol, via the methylation of lanosterol to eburicol by erg6, followed by C14-demethylation by erg11/cyp1 and C4-demethylation by the demethylation complex erg25-erg26-erg27. The protein is C-8 sterol isomerase erg2 of Schizosaccharomyces pombe (strain 972 / ATCC 24843) (Fission yeast).